Here is a 61-residue protein sequence, read N- to C-terminus: Small ribosomal subunit protein uS14B (61 aa).

Positions 24, 27, 40, and 43 each coordinate Zn(2+).

Belongs to the universal ribosomal protein uS14 family. Zinc-binding uS14 subfamily. In terms of assembly, part of the 30S ribosomal subunit. Contacts proteins S3 and S10. It depends on Zn(2+) as a cofactor.

Binds 16S rRNA, required for the assembly of 30S particles and may also be responsible for determining the conformation of the 16S rRNA at the A site. This chain is Small ribosomal subunit protein uS14B, found in Mycolicibacterium smegmatis (strain ATCC 700084 / mc(2)155) (Mycobacterium smegmatis).